We begin with the raw amino-acid sequence, 542 residues long: Chaperonin GroEL 2 (542 aa).

ATP-binding positions include Thr-30–Pro-33, Lys-51, Asp-87–Thr-91, Gly-415, and Asp-495.

Belongs to the chaperonin (HSP60) family. In terms of assembly, forms a cylinder of 14 subunits composed of two heptameric rings stacked back-to-back. Interacts with the co-chaperonin GroES.

It is found in the cytoplasm. The enzyme catalyses ATP + H2O + a folded polypeptide = ADP + phosphate + an unfolded polypeptide.. Together with its co-chaperonin GroES, plays an essential role in assisting protein folding. The GroEL-GroES system forms a nano-cage that allows encapsulation of the non-native substrate proteins and provides a physical environment optimized to promote and accelerate protein folding. In Methylococcus capsulatus (strain ATCC 33009 / NCIMB 11132 / Bath), this protein is Chaperonin GroEL 2.